A 509-amino-acid chain; its full sequence is MYRSARSLHRFSASLSDLRAAQRSIKARNVCPAPGLRHQTVRMASSEAFRIERDTFGELKVPSDKYYGAQTVRSTMNFRIGGVTERMPIQVIRAFGILKKAAAEVNKDYGLDPKIADAIMKAADEVESGKLDDHFPLVVWQTGSGTQTNMNVNEVISNRAIEMLGGKLGSKDPVHPNDHVNKSQSSNDTFPTAMHIAAAKEVHEVLLPGLQTLHDALAAKAEQFKDIIKIGRTHTQDAVPLSLGQEFGGYVQQVKYSIARVKASLPRVYELAAGGTAVGTGLNTRIGFAEKVADKVSALTGLPFVTAANKFEALAAHDALVELSGALNTVAVSMMKIANDIRFLGSGPRSGLGELILPENEPGSSIMPGKVNPTQCEAMTMVAAQVMGNHVAVTVGGSNGHFELNVFKPMIIKNVLNSARLLGDASVSFTNNCVVGIEANTERINKLMSESLMLVTALNPHIGYDKAAKIAKTAHKDGSTLKEAALKLGFLNEQQFEEWVRPHDMLGPK.

Residues 1–43 constitute a mitochondrion transit peptide; the sequence is MYRSARSLHRFSASLSDLRAAQRSIKARNVCPAPGLRHQTVRM. Residues 144-146, 175-178, 185-187, and Thr-233 contribute to the substrate site; these read SGT, HPND, and SSN. Residue His-234 is the Proton donor/acceptor of the active site. Ser-364 is a catalytic residue. Residues Ser-365 and 370-372 contribute to the substrate site; that span reads KVN.

It belongs to the class-II fumarase/aspartase family. Fumarase subfamily. In terms of assembly, homotetramer.

The protein resides in the mitochondrion. It is found in the cytoplasm. Its subcellular location is the cytosol. It localises to the nucleus. The protein localises to the chromosome. It catalyses the reaction (S)-malate = fumarate + H2O. It functions in the pathway carbohydrate metabolism; tricarboxylic acid cycle; (S)-malate from fumarate: step 1/1. In terms of biological role, catalyzes the reversible stereospecific interconversion of fumarate to L-malate. Experiments in other species have demonstrated that specific isoforms of this protein act in defined pathways and favor one direction over the other. Its function is as follows. Catalyzes the hydration of fumarate to L-malate in the tricarboxylic acid (TCA) cycle to facilitate a transition step in the production of energy in the form of NADH. Catalyzes the dehydration of L-malate to fumarate. Fumarate metabolism in the cytosol plays a role during urea cycle and arginine metabolism; fumarate being a by-product of the urea cycle and amino-acid catabolism. Also plays a role in DNA repair by promoting non-homologous end-joining (NHEJ). In response to DNA damage translocates to the nucleus and accumulates at DNA double-strand breaks (DSBs): acts by catalyzing formation of fumarate. This is Fumarate hydratase, mitochondrial from Danio rerio (Zebrafish).